Reading from the N-terminus, the 109-residue chain is Ubiquitin-related modifier 1 homolog (109 aa).

Position 109 is a 1-thioglycine (Gly109). Residue Gly109 forms a Glycyl lysine isopeptide (Gly-Lys) (interchain with K-? in acceptor proteins) linkage.

It belongs to the URM1 family. C-terminal thiocarboxylation occurs in 2 steps, it is first acyl-adenylated (-COAMP) via the hesA/moeB/thiF part of the MOCS3 homolog, then thiocarboxylated (-COSH) via the rhodanese domain of the MOCS3 homolog.

The protein localises to the cytoplasm. Its pathway is tRNA modification; 5-methoxycarbonylmethyl-2-thiouridine-tRNA biosynthesis. Functionally, acts as a sulfur carrier required for 2-thiolation of mcm(5)S(2)U at tRNA wobble positions of cytosolic tRNA(Lys), tRNA(Glu) and tRNA(Gln). Serves as sulfur donor in tRNA 2-thiolation reaction by being thiocarboxylated (-COSH) at its C-terminus by MOCS3. The sulfur is then transferred to tRNA to form 2-thiolation of mcm(5)S(2)U. Also acts as a ubiquitin-like protein (UBL) that is covalently conjugated via an isopeptide bond to lysine residues of target proteins. The thiocarboxylated form serves as substrate for conjugation and oxidative stress specifically induces the formation of UBL-protein conjugates. The sequence is that of Ubiquitin-related modifier 1 homolog from Bombyx mori (Silk moth).